Consider the following 191-residue polypeptide: MQTIKCVVVGDGAVGKTCLLISYTTNKFPSEYVPTVFDNYAVTVMIGGEPYTLGLFDTAGQEDYDRLRPLSYPQTDVFLVCFSVVSPSSFENVKEKWVPEITHHCQKTPFLLVGTQIDLRDEQSTLEKLAKNKQKPITLEQGEKLAKELKAVKYVECSALTQKGLKNVFDEAILAALEPPEPTKKRKCKFL.

A GTP-binding site is contributed by 10–17 (GDGAVGKT). The Effector region motif lies at 32–40 (YVPTVFDNY). Residues 57-61 (DTAGQ) and 115-118 (TQID) each bind GTP. Cys-188 bears the Cysteine methyl ester mark. Cys-188 is lipidated: S-geranylgeranyl cysteine. A propeptide spans 189-191 (KFL) (removed in mature form).

Belongs to the small GTPase superfamily. Rho family. CDC42 subfamily.

It localises to the cell junction. The protein localises to the adherens junction. Its subcellular location is the cell membrane. In terms of biological role, regulates mbt kinase activity and is also required to recruit mbt to adherens junctions. Together with mbt, regulates photoreceptor cell morphogenesis. The protein is Cdc42 homolog of Aedes aegypti (Yellowfever mosquito).